Here is a 296-residue protein sequence, read N- to C-terminus: 33 kDa chaperonin (296 aa).

Cystine bridges form between C237-C239 and C270-C273.

The protein belongs to the HSP33 family. Under oxidizing conditions two disulfide bonds are formed involving the reactive cysteines. Under reducing conditions zinc is bound to the reactive cysteines and the protein is inactive.

The protein resides in the cytoplasm. Its function is as follows. Redox regulated molecular chaperone. Protects both thermally unfolding and oxidatively damaged proteins from irreversible aggregation. Plays an important role in the bacterial defense system toward oxidative stress. In Acetivibrio thermocellus (strain ATCC 27405 / DSM 1237 / JCM 9322 / NBRC 103400 / NCIMB 10682 / NRRL B-4536 / VPI 7372) (Clostridium thermocellum), this protein is 33 kDa chaperonin.